The following is a 31-amino-acid chain: Cyclotide hyen-I (31 aa).

Residues 1-31 constitute a cross-link (cyclopeptide (Gly-Asp)); that stretch reads GSTPCGESCVWIPCISGIVGCSCSNKVCYMD. Intrachain disulfides connect Cys-5–Cys-21, Cys-9–Cys-23, and Cys-14–Cys-28.

Post-translationally, this is a cyclic peptide. Detected in seeds (at protein level).

Its function is as follows. Probably participates in a plant defense mechanism. This Pigea enneasperma (Spade flower) protein is Cyclotide hyen-I.